Consider the following 316-residue polypeptide: Ribose-phosphate pyrophosphokinase (316 aa).

ATP is bound by residues 37–39 (DGE) and 96–97 (RQ). 2 residues coordinate Mg(2+): His130 and Asp171. Lys194 is an active-site residue. D-ribose 5-phosphate-binding residues include Arg196 and Asp221.

The protein belongs to the ribose-phosphate pyrophosphokinase family. Class I subfamily. In terms of assembly, homohexamer. It depends on Mg(2+) as a cofactor.

It is found in the cytoplasm. It carries out the reaction D-ribose 5-phosphate + ATP = 5-phospho-alpha-D-ribose 1-diphosphate + AMP + H(+). The protein operates within metabolic intermediate biosynthesis; 5-phospho-alpha-D-ribose 1-diphosphate biosynthesis; 5-phospho-alpha-D-ribose 1-diphosphate from D-ribose 5-phosphate (route I): step 1/1. Functionally, involved in the biosynthesis of the central metabolite phospho-alpha-D-ribosyl-1-pyrophosphate (PRPP) via the transfer of pyrophosphoryl group from ATP to 1-hydroxyl of ribose-5-phosphate (Rib-5-P). In Rhodopirellula baltica (strain DSM 10527 / NCIMB 13988 / SH1), this protein is Ribose-phosphate pyrophosphokinase.